A 983-amino-acid polypeptide reads, in one-letter code: Polyhomeotic-like protein 3 (983 aa).

7 disordered regions span residues 1-34 (MDTE…MQQP), 103-149 (LSSG…SSTS), 225-283 (VLSS…TAVT), 313-332 (LHSP…QQQQ), 339-410 (LQNS…SQSP), 477-509 (PGQQ…STSP), and 601-620 (DECV…PAAI). 2 stretches are compositionally biased toward low complexity: residues 9–29 (TSSV…TSSS) and 103–126 (LSSG…SQTS). Over residues 127 to 139 (INLSTSPTPAQLI) the composition is skewed to polar residues. The span at 140-149 (SRSQASSSTS) shows a compositional bias: low complexity. The span at 225-257 (VLSSSQNGPPKSTSQTQSLTICHNKTTVTSSKI) shows a compositional bias: polar residues. The span at 258–271 (SQRDPSPESNKKGE) shows a compositional bias: basic and acidic residues. A phosphoserine mark is found at S263 and S272. The segment covering 274 to 283 (SLESRSTAVT) has biased composition (polar residues). Phosphoserine is present on S315. The span at 365-383 (SNAQSQHCSPIQSHPSPLT) shows a compositional bias: polar residues. The span at 384–398 (VSPNQSQSAQQSVVV) shows a compositional bias: low complexity. Polar residues predominate over residues 477–489 (PGQQIVSPSHQQY). Low complexity predominate over residues 490 to 506 (SSLQSSPIPIASPPQMS). A phosphothreonine mark is found at T609 and T614. Position 616 is a phosphoserine (S616). Residues K691 and K732 each participate in a glycyl lysine isopeptide (Lys-Gly) (interchain with G-Cter in SUMO2) cross-link. The short motif at 691–720 (KPPQAIVKPQILTHVIEGFVIQEGLEPFPV) is the HD1 element. Phosphoserine occurs at positions 761 and 762. An FCS-type zinc finger spans residues 776-810 (EEMDSELLKCEFCGKMGYANEFLRSKRFCTMSCAK). Zn(2+) contacts are provided by C785, C788, C804, and C808. K810 participates in a covalent cross-link: Glycyl lysine isopeptide (Lys-Gly) (interchain with G-Cter in SUMO2). Disordered stretches follow at residues 827 to 847 (RKPD…PDGA) and 864 to 889 (EEDL…SERE). Residues 919 to 983 (WTVDDVWAFI…CARINSLKES (65 aa)) form the SAM domain.

As to quaternary structure, component of a PRC1-like complex.

It is found in the nucleus. Functionally, component of a Polycomb group (PcG) multiprotein PRC1-like complex, a complex class required to maintain the transcriptionally repressive state of many genes, including Hox genes, throughout development. PcG PRC1 complex acts via chromatin remodeling and modification of histones; it mediates monoubiquitination of histone H2A 'Lys-119', rendering chromatin heritably changed in its expressibility. The polypeptide is Polyhomeotic-like protein 3 (PHC3) (Homo sapiens (Human)).